The chain runs to 170 residues: Shikimate kinase (170 aa).

11–16 is an ATP binding site; the sequence is LSGKST. Ser15 serves as a coordination point for Mg(2+). Substrate contacts are provided by Asp33, Arg57, and Gly79. Residue Arg119 participates in ATP binding. Residue Arg137 coordinates substrate.

Belongs to the shikimate kinase family. As to quaternary structure, monomer. Mg(2+) serves as cofactor.

The protein resides in the cytoplasm. It catalyses the reaction shikimate + ATP = 3-phosphoshikimate + ADP + H(+). It participates in metabolic intermediate biosynthesis; chorismate biosynthesis; chorismate from D-erythrose 4-phosphate and phosphoenolpyruvate: step 5/7. In terms of biological role, catalyzes the specific phosphorylation of the 3-hydroxyl group of shikimic acid using ATP as a cosubstrate. This is Shikimate kinase from Clostridium botulinum (strain ATCC 19397 / Type A).